A 158-amino-acid chain; its full sequence is C-type lectin lectoxin-Enh7 (158 aa).

The N-terminal stretch at 1 to 23 (MGQFTVVSLGLLAVFLSLSGAKG) is a signal peptide. Cystine bridges form between Cys-26/Cys-37, Cys-54/Cys-154, and Cys-129/Cys-146. The 123-residue stretch at 33–155 (RNGVCNKLFP…CASLHPFICQ (123 aa)) folds into the C-type lectin domain. The Mannose-binding motif lies at 119–121 (EPN). Glu-127, Asn-142, and Asp-143 together coordinate Ca(2+).

The protein belongs to the true venom lectin family. Expressed by the venom gland.

It localises to the secreted. Functionally, mannose-binding lectin which recognizes specific carbohydrate structures and agglutinates a variety of animal cells by binding to cell-surface glycoproteins and glycolipids. May be a calcium-dependent lectin. The polypeptide is C-type lectin lectoxin-Enh7 (Pseudoferania polylepis (Macleay's water snake)).